The chain runs to 217 residues: Frataxin, mitochondrial (217 aa).

The transit peptide at 1 to 42 (MWTLGRRSVASFLPRSALPGFAPTRAGAPRPAKDLSLSGLPG) directs the protein to the mitochondrion.

This sequence belongs to the frataxin family. As to quaternary structure, component of the mitochondrial core iron-sulfur cluster (ISC) complex composed of NFS1, LYRM4, NDUFAB1, ISCU, FXN, and FDX2; this complex is a heterohexamer containing two copies of each monomer. Homodimer. Monomer (probable predominant form). Oligomer. Monomers and polymeric aggregates of &gt;1 MDa have been isolated from mitochondria. A small fraction of heterologous overexpressed recombinant frataxin forms high-molecular weight aggregates that incorporate iron. Interacts with LYRM4. Interacts (via ferrous form) with ISCU; the interaction is possible when both are bound to the dimeric form of the cysteine desulfurase complex (NFS1:LYRM4) and the interaction enhances FXN interaction to the dimeric form of the cysteine desulfurase complex (NFS1:LYRM4). Interacts with FECH; one iron-bound FXN monomer seems to interact with a FECH homodimer. Interacts with SDHA and SDHB. Interacts with ACO2; the interaction is dependent on citrate. Interacts with HSPA9. In terms of assembly, interacts with ACO1. Interacts with ISCU (cytoplasmic form). Processed in two steps by mitochondrial processing peptidase (MPP). MPP first cleaves the precursor to intermediate form and subsequently converts the intermediate to yield frataxin mature form (frataxin(81-210)) which is the predominant form. The additional forms, frataxin(56-210) and frataxin(78-210), seem to be produced when the normal maturation process is impaired; their physiological relevance is unsure.

Its subcellular location is the mitochondrion. The protein resides in the cytoplasm. It localises to the cytosol. It catalyses the reaction 4 Fe(2+) + O2 + 4 H(+) = 4 Fe(3+) + 2 H2O. Its function is as follows. Functions as an activator of persulfide transfer to the scaffoding protein ISCU as component of the core iron-sulfur cluster (ISC) assembly complex and participates to the [2Fe-2S] cluster assembly. Accelerates sulfur transfer from NFS1 persulfide intermediate to ISCU and to small thiols such as L-cysteine and glutathione leading to persulfuration of these thiols and ultimately sulfide release. Binds ferrous ion and is released from FXN upon the addition of both L-cysteine and reduced FDX2 during [2Fe-2S] cluster assembly. The core iron-sulfur cluster (ISC) assembly complex is involved in the de novo synthesis of a [2Fe-2S] cluster, the first step of the mitochondrial iron-sulfur protein biogenesis. This process is initiated by the cysteine desulfurase complex (NFS1:LYRM4:NDUFAB1) that produces persulfide which is delivered on the scaffold protein ISCU in a FXN-dependent manner. Then this complex is stabilized by FDX2 which provides reducing equivalents to accomplish the [2Fe-2S] cluster assembly. Finally, the [2Fe-2S] cluster is transferred from ISCU to chaperone proteins, including HSCB, HSPA9 and GLRX5. May play a role in the protection against iron-catalyzed oxidative stress through its ability to catalyze the oxidation of Fe(2+) to Fe(3+); the oligomeric form but not the monomeric form has in vitro ferroxidase activity. May be able to store large amounts of iron in the form of a ferrihydrite mineral by oligomerization; however, the physiological relevance is unsure as reports are conflicting and the function has only been shown using heterologous overexpression systems. May function as an iron chaperone protein that protects the aconitase [4Fe-4S]2+ cluster from disassembly and promotes enzyme reactivation. May play a role as a high affinity iron binding partner for FECH that is capable of both delivering iron to ferrochelatase and mediating the terminal step in mitochondrial heme biosynthesis. Modulates the RNA-binding activity of ACO1. May be involved in the cytoplasmic iron-sulfur protein biogenesis. May contribute to oxidative stress resistance and overall cell survival. This Bos taurus (Bovine) protein is Frataxin, mitochondrial.